A 174-amino-acid chain; its full sequence is Probable N-acetyltransferase Rv2775 (174 aa).

The N-acetyltransferase domain maps to 6-172; the sequence is IRIRAAKPID…VGYRLYRSAP (167 aa).

This sequence belongs to the acetyltransferase family.

The polypeptide is Probable N-acetyltransferase Rv2775 (Mycobacterium tuberculosis (strain ATCC 25618 / H37Rv)).